Consider the following 268-residue polypeptide: tRNA pseudouridine synthase A (268 aa).

D63 acts as the Nucleophile in catalysis. A substrate-binding site is contributed by Y122.

This sequence belongs to the tRNA pseudouridine synthase TruA family. In terms of assembly, homodimer.

The catalysed reaction is uridine(38/39/40) in tRNA = pseudouridine(38/39/40) in tRNA. In terms of biological role, formation of pseudouridine at positions 38, 39 and 40 in the anticodon stem and loop of transfer RNAs. The sequence is that of tRNA pseudouridine synthase A from Treponema denticola (strain ATCC 35405 / DSM 14222 / CIP 103919 / JCM 8153 / KCTC 15104).